The sequence spans 420 residues: Cytochrome c biogenesis protein Ccs1 (420 aa).

Transmembrane regions (helical) follow at residues 12 to 32 (LRFS…GTVI), 71 to 91 (TWWF…CTFL), and 157 to 177 (IAPI…IVGS).

The protein belongs to the Ccs1/CcsB family. In terms of assembly, may interact with CcsA.

The protein resides in the plastid. It localises to the chloroplast thylakoid membrane. Its function is as follows. Required during biogenesis of c-type cytochromes (cytochrome c6 and cytochrome f) at the step of heme attachment. The chain is Cytochrome c biogenesis protein Ccs1 from Phaeodactylum tricornutum (strain CCAP 1055/1).